The chain runs to 810 residues: Oligoxyloglucan-reducing end-specific xyloglucanase (810 aa).

Positions 1-28 (MRAKNGPGSWLALTAIATSLNTLALAAA) are cleaved as a signal peptide. Asn-32 is a glycosylation site (N-linked (GlcNAc...) asparagine). Residue Asp-66 is the Nucleophile of the active site. One copy of the BNR 1 repeat lies at 126-135 (FVSQDRGATF). The N-linked (GlcNAc...) asparagine glycan is linked to Asn-188. The BNR 2 repeat unit spans residues 226-236 (YVTRDSGESWE). Asn-298, Asn-312, and Asn-321 each carry an N-linked (GlcNAc...) asparagine glycan. The BNR 3 repeat unit spans residues 359–369 (YLSHDGGKSWK). Asn-455 carries an N-linked (GlcNAc...) asparagine glycan. The active-site Proton donor is Asp-498. Residue Asn-544 is glycosylated (N-linked (GlcNAc...) asparagine). A BNR 4 repeat occupies 554–564 (YSADGGSSWTK). Residues Asn-573 and Asn-612 are each glycosylated (N-linked (GlcNAc...) asparagine). The BNR 5 repeat unit spans residues 617–626 (YVTTDLGQTW). Asn-638 carries N-linked (GlcNAc...) asparagine glycosylation. BNR repeat units lie at residues 658–667 (YLSRDGGLSY), 705–716 (YHTRNFGKKWTK), and 759–769 (YRSDDNGKTWV).

Belongs to the glycosyl hydrolase 74 family.

The protein localises to the secreted. It carries out the reaction Hydrolysis of cellobiose from the reducing end of xyloglucans consisting of a beta-(1-&gt;4)-linked glucan carrying alpha-D-xylosyl groups on O-6 of the glucose residues. To be a substrate, the first residue must be unsubstituted, the second residue may bear a xylosyl group, whether further glycosylated or not, and the third residue, which becomes the new terminus by the action of the enzyme, is preferably xylosylated, but this xylose residue must not be further substituted.. Oligoxyloglucan-reducing end-specific xyloglucanase involved in degradation of xyloglucans. Releases the first two glycosyl segments from oligoxyloglucans. Active against cotton xyloglucan, tamarind xyloglucan and tamarind xyloglucan oligomers. The polypeptide is Oligoxyloglucan-reducing end-specific xyloglucanase (xgcA) (Emericella nidulans (strain FGSC A4 / ATCC 38163 / CBS 112.46 / NRRL 194 / M139) (Aspergillus nidulans)).